A 263-amino-acid chain; its full sequence is uncharacterized protein (263 aa).

This sequence belongs to the AtsA family.

The protein localises to the plastid. It localises to the chloroplast. This is an uncharacterized protein from Porphyra purpurea (Red seaweed).